A 249-amino-acid polypeptide reads, in one-letter code: MFGLKAKSTKKVFGGIPKHIGIIMDGNGRWAKKRLKPRVFGHKAGMDALQEVTITASELGVKVLTVYAFSTENWSRPQDEVSFIMNLPVTFFDKYVPVLHENNVKIQMIGETSRLPEDTLAALNAAIDKTKRNTGLILNFALNYGGRAEITSAVRFIAQDVLDAKLNPGDITEDLIANYLMTDHLPYLYRDPDLIIRTSGELRLSNFLPWQSAYSEFYFTPVLWPDFKKAELLKAIADYNHRQRRFGKV.

Asp-25 is an active-site residue. Position 25 (Asp-25) interacts with Mg(2+). Residues 26–29, Trp-30, Arg-38, His-42, and 70–72 contribute to the substrate site; these read GNGR and STE. The Proton acceptor role is filled by Asn-73. Substrate contacts are provided by residues Trp-74, Arg-76, Arg-197, and 203–205; that span reads RLS. A Mg(2+)-binding site is contributed by Glu-216.

Belongs to the UPP synthase family. In terms of assembly, homodimer. Mg(2+) is required as a cofactor.

In terms of biological role, catalyzes the condensation of isopentenyl diphosphate (IPP) with allylic pyrophosphates generating different type of terpenoids. The chain is Isoprenyl transferase from Streptococcus pyogenes serotype M3 (strain ATCC BAA-595 / MGAS315).